The primary structure comprises 291 residues: ATP synthase subunit a (291 aa).

6 helical membrane-spanning segments follow: residues 51–71, 117–137, 146–166, 173–193, 213–233, and 239–259; these read FSFTNPSLFMLLTLSLVLLLV, FFPCIFVTFTFLLFCNLQGMI, HFLITLGLSFSIFIGITIVGF, FLSFLLPAGVPLPLAPFLVLL, MMAGHSLVKILSGFAWTMLCM, and FIGDLGPLFIVLALTGPELGV.

It belongs to the ATPase A chain family. As to quaternary structure, F-type ATPases have 2 components, CF(1) - the catalytic core - and CF(0) - the membrane proton channel. CF(1) has five subunits: alpha(3), beta(3), gamma(1), delta(1), epsilon(1). CF(0) has three main subunits: a, b and c.

The protein resides in the mitochondrion inner membrane. Mitochondrial membrane ATP synthase (F(1)F(0) ATP synthase or Complex V) produces ATP from ADP in the presence of a proton gradient across the membrane which is generated by electron transport complexes of the respiratory chain. F-type ATPases consist of two structural domains, F(1) - containing the extramembraneous catalytic core and F(0) - containing the membrane proton channel, linked together by a central stalk and a peripheral stalk. During catalysis, ATP synthesis in the catalytic domain of F(1) is coupled via a rotary mechanism of the central stalk subunits to proton translocation. Key component of the proton channel; it may play a direct role in the translocation of protons across the membrane. The polypeptide is ATP synthase subunit a (ATP6) (Vicia faba (Broad bean)).